The primary structure comprises 964 residues: Activator of stress genes 1 (964 aa).

Residues 21 to 47 constitute a DNA-binding region (zn(2)-C6 fungal-type); the sequence is CDECRKKKVKCDGQQPCIHCTVYSYEC. A disordered region spans residues 104–125; sequence ASTIPASNNPSKPRKYKTKSTR. Ser166 carries the post-translational modification Phosphoserine; by ATM or ATR. Ser186 bears the Phosphoserine mark. 3 stretches are compositionally biased toward polar residues: residues 190–201, 209–225, and 733–759; these read PVLSSNSKNSTP, KSDS…DSVD, and NNTP…TNMS. 3 disordered regions span residues 190-225, 733-764, and 800-900; these read PVLS…DSVD, NNTP…ERDP, and NSAF…SPSY. A compositionally biased stretch (low complexity) spans 800-896; it reads NSAFDFSSSK…NDFGIKIDNN (97 aa). The residue at position 963 (Ser963) is a Phosphoserine.

This sequence belongs to the ASG1 family.

It localises to the nucleus. Probable transcription factor involved in the stress response. This is Activator of stress genes 1 (ASG1) from Saccharomyces cerevisiae (strain ATCC 204508 / S288c) (Baker's yeast).